The sequence spans 529 residues: Bifunctional purine biosynthesis protein PurH (529 aa).

Positions 1-146 constitute an MGS-like domain; that stretch reads MAPTALLSVS…KNHAHVAVLT (146 aa).

The protein belongs to the PurH family.

The catalysed reaction is (6R)-10-formyltetrahydrofolate + 5-amino-1-(5-phospho-beta-D-ribosyl)imidazole-4-carboxamide = 5-formamido-1-(5-phospho-D-ribosyl)imidazole-4-carboxamide + (6S)-5,6,7,8-tetrahydrofolate. The enzyme catalyses IMP + H2O = 5-formamido-1-(5-phospho-D-ribosyl)imidazole-4-carboxamide. It participates in purine metabolism; IMP biosynthesis via de novo pathway; 5-formamido-1-(5-phospho-D-ribosyl)imidazole-4-carboxamide from 5-amino-1-(5-phospho-D-ribosyl)imidazole-4-carboxamide (10-formyl THF route): step 1/1. It functions in the pathway purine metabolism; IMP biosynthesis via de novo pathway; IMP from 5-formamido-1-(5-phospho-D-ribosyl)imidazole-4-carboxamide: step 1/1. The chain is Bifunctional purine biosynthesis protein PurH from Synechococcus sp. (strain CC9311).